The sequence spans 180 residues: ATP-dependent protease subunit HslV (180 aa).

Thr-7 is a catalytic residue. The Na(+) site is built by Gly-165, Cys-168, and Thr-171.

This sequence belongs to the peptidase T1B family. HslV subfamily. A double ring-shaped homohexamer of HslV is capped on each side by a ring-shaped HslU homohexamer. The assembly of the HslU/HslV complex is dependent on binding of ATP.

It is found in the cytoplasm. It catalyses the reaction ATP-dependent cleavage of peptide bonds with broad specificity.. Its activity is regulated as follows. Allosterically activated by HslU binding. Protease subunit of a proteasome-like degradation complex believed to be a general protein degrading machinery. The chain is ATP-dependent protease subunit HslV from Bacillus cereus (strain Q1).